The sequence spans 97 residues: Citrate lyase acyl carrier protein 2 (97 aa).

Serine 14 carries the post-translational modification O-(phosphoribosyl dephospho-coenzyme A)serine.

This sequence belongs to the CitD family. As to quaternary structure, oligomer with a subunit composition of (alpha,beta,gamma)6.

It is found in the cytoplasm. In terms of biological role, covalent carrier of the coenzyme of citrate lyase. This Salmonella paratyphi A (strain ATCC 9150 / SARB42) protein is Citrate lyase acyl carrier protein 2.